The following is a 138-amino-acid chain: Phosphoribosyl-AMP cyclohydrolase (138 aa).

Asp84 lines the Mg(2+) pocket. A Zn(2+)-binding site is contributed by Cys85. Positions 86 and 88 each coordinate Mg(2+). Zn(2+)-binding residues include Cys102 and Cys109.

It belongs to the PRA-CH family. In terms of assembly, homodimer. Mg(2+) is required as a cofactor. It depends on Zn(2+) as a cofactor.

It is found in the cytoplasm. It carries out the reaction 1-(5-phospho-beta-D-ribosyl)-5'-AMP + H2O = 1-(5-phospho-beta-D-ribosyl)-5-[(5-phospho-beta-D-ribosylamino)methylideneamino]imidazole-4-carboxamide. The protein operates within amino-acid biosynthesis; L-histidine biosynthesis; L-histidine from 5-phospho-alpha-D-ribose 1-diphosphate: step 3/9. Its function is as follows. Catalyzes the hydrolysis of the adenine ring of phosphoribosyl-AMP. This chain is Phosphoribosyl-AMP cyclohydrolase, found in Burkholderia multivorans (strain ATCC 17616 / 249).